The primary structure comprises 428 residues: Enolase (428 aa).

(2R)-2-phosphoglycerate is bound at residue glutamine 163. The active-site Proton donor is glutamate 205. Positions 242, 285, and 312 each coordinate Mg(2+). Residues lysine 337, arginine 366, serine 367, and lysine 388 each coordinate (2R)-2-phosphoglycerate. Lysine 337 functions as the Proton acceptor in the catalytic mechanism.

This sequence belongs to the enolase family. Requires Mg(2+) as cofactor.

It is found in the cytoplasm. The protein localises to the secreted. Its subcellular location is the cell surface. It carries out the reaction (2R)-2-phosphoglycerate = phosphoenolpyruvate + H2O. Its pathway is carbohydrate degradation; glycolysis; pyruvate from D-glyceraldehyde 3-phosphate: step 4/5. Catalyzes the reversible conversion of 2-phosphoglycerate (2-PG) into phosphoenolpyruvate (PEP). It is essential for the degradation of carbohydrates via glycolysis. This Neisseria meningitidis serogroup C (strain 053442) protein is Enolase.